The following is a 648-amino-acid chain: S-M checkpoint control protein rad4 (648 aa).

2 consecutive BRCT domains span residues 2–92 (GSSK…DDGL) and 96–185 (KHFL…YFQL). Positions 242–249 (KRGKKRDR) match the Nuclear localization signal motif. 2 BRCT domains span residues 298–384 (NEAK…EHAL) and 392–486 (SLVP…SPWA). Position 592 is a phosphoserine (S592). The Nuclear localization signal signature appears at 643–648 (RKLRRR).

In terms of assembly, interacts with drc1/sld2. Interacts (via BRCT1,2 domains) with crb2; a single rad4 molecule interacts simultaneously with both 'Thr-187' phosphorylation sites in a crb2 dimer.

Its subcellular location is the nucleus. Its function is as follows. Essential component for DNA replication and also the checkpoint control system which couples S and M phases. May directly or indirectly interact with chromatin proteins to form the complex required for the initiation and/or progression of DNA synthesis. Interacts simultaneously with both 'Thr-187' phosphorylation sites in a crb2 dimer for establishing the DNA checkpoint. In Schizosaccharomyces pombe (strain 972 / ATCC 24843) (Fission yeast), this protein is S-M checkpoint control protein rad4 (rad4).